Here is a 666-residue protein sequence, read N- to C-terminus: LEAF RUST 10 DISEASE-RESISTANCE LOCUS RECEPTOR-LIKE PROTEIN KINASE-like 2.5 (666 aa).

Residues 1 to 30 form the signal peptide; the sequence is MINFSLSLTKSMSYSFIWMLFVIHISCVLS. The Extracellular portion of the chain corresponds to 31 to 275; the sequence is ADGNHILCSP…PTRNKVILKL (245 aa). Residues N119, N141, N171, and N198 are each glycosylated (N-linked (GlcNAc...) asparagine). The helical transmembrane segment at 276-296 threads the bilayer; sequence FFIVIYVLGIGAASFAMMGVI. The Cytoplasmic portion of the chain corresponds to 297–666; the sequence is LVVTCLNCLI…YTEICSINVA (370 aa). Residues 348-636 enclose the Protein kinase domain; sequence KSFAEVIGKG…ALEVPPRPVL (289 aa). ATP contacts are provided by residues 354-362 and K376; that span reads IGKGGFGTV. Y420 carries the post-translational modification Phosphotyrosine. D471 acts as the Proton acceptor in catalysis. Phosphothreonine is present on residues T508 and T511.

Belongs to the protein kinase superfamily. Ser/Thr protein kinase family.

The protein resides in the membrane. It carries out the reaction L-seryl-[protein] + ATP = O-phospho-L-seryl-[protein] + ADP + H(+). The catalysed reaction is L-threonyl-[protein] + ATP = O-phospho-L-threonyl-[protein] + ADP + H(+). This chain is LEAF RUST 10 DISEASE-RESISTANCE LOCUS RECEPTOR-LIKE PROTEIN KINASE-like 2.5, found in Arabidopsis thaliana (Mouse-ear cress).